Reading from the N-terminus, the 299-residue chain is ATP phosphoribosyltransferase (299 aa).

It belongs to the ATP phosphoribosyltransferase family. Long subfamily. In terms of assembly, equilibrium between an active dimeric form, an inactive hexameric form and higher aggregates. Interconversion between the various forms is largely reversible and is influenced by the natural substrates and inhibitors of the enzyme. Mg(2+) serves as cofactor.

The protein localises to the cytoplasm. It carries out the reaction 1-(5-phospho-beta-D-ribosyl)-ATP + diphosphate = 5-phospho-alpha-D-ribose 1-diphosphate + ATP. It functions in the pathway amino-acid biosynthesis; L-histidine biosynthesis; L-histidine from 5-phospho-alpha-D-ribose 1-diphosphate: step 1/9. Feedback inhibited by histidine. In terms of biological role, catalyzes the condensation of ATP and 5-phosphoribose 1-diphosphate to form N'-(5'-phosphoribosyl)-ATP (PR-ATP). Has a crucial role in the pathway because the rate of histidine biosynthesis seems to be controlled primarily by regulation of HisG enzymatic activity. The protein is ATP phosphoribosyltransferase of Proteus mirabilis (strain HI4320).